We begin with the raw amino-acid sequence, 194 residues long: Large ribosomal subunit protein uL5 (194 aa).

The protein belongs to the universal ribosomal protein uL5 family. Part of the 50S ribosomal subunit; part of the 5S rRNA/L5/L18/L25 subcomplex. Contacts the 5S rRNA and the P site tRNA. Forms a bridge to the 30S subunit in the 70S ribosome.

This is one of the proteins that bind and probably mediate the attachment of the 5S RNA into the large ribosomal subunit, where it forms part of the central protuberance. In the 70S ribosome it contacts protein S13 of the 30S subunit (bridge B1b), connecting the 2 subunits; this bridge is implicated in subunit movement. Contacts the P site tRNA; the 5S rRNA and some of its associated proteins might help stabilize positioning of ribosome-bound tRNAs. In Chlorobium luteolum (strain DSM 273 / BCRC 81028 / 2530) (Pelodictyon luteolum), this protein is Large ribosomal subunit protein uL5.